A 239-amino-acid polypeptide reads, in one-letter code: Ribonuclease PH (239 aa).

Residues arginine 87 and 125-127 contribute to the phosphate site; that span reads GTR.

It belongs to the RNase PH family. As to quaternary structure, homohexameric ring arranged as a trimer of dimers.

It catalyses the reaction tRNA(n+1) + phosphate = tRNA(n) + a ribonucleoside 5'-diphosphate. In terms of biological role, phosphorolytic 3'-5' exoribonuclease that plays an important role in tRNA 3'-end maturation. Removes nucleotide residues following the 3'-CCA terminus of tRNAs; can also add nucleotides to the ends of RNA molecules by using nucleoside diphosphates as substrates, but this may not be physiologically important. Probably plays a role in initiation of 16S rRNA degradation (leading to ribosome degradation) during starvation. The sequence is that of Ribonuclease PH from Pseudomonas paraeruginosa (strain DSM 24068 / PA7) (Pseudomonas aeruginosa (strain PA7)).